A 462-amino-acid chain; its full sequence is uncharacterized protein (462 aa).

2 helical membrane-spanning segments follow: residues 12–32 and 257–277; these read WWWL…APTV and GLCV…LELV.

The protein belongs to the HHV-5 US29 protein family.

Its subcellular location is the host membrane. This is an uncharacterized protein from Homo sapiens (Human).